The chain runs to 426 residues: MQTIFAQATARGKAGVAIIRISGPDAFEVGRCLLGSLPDAGRFALRDVRTPLGELLDRGLVLVFKAPASFTGEDTVELQLHGSVAVVRAVEGAIRSTGLARLADAGEFTQRALLNDMLDLTQVEGLGRLIDSETEAQRKVAQASFEGGLSDKAERWRHLMIRAAALLEASIDFVDEDVPVDVVPEVQSILMGLDTDLAKEVTGAVVAERLHDGFEVAILGAPNAGKSTLLNVLADREIAITSDVPGTTRDVIEARLDVSGLPVTFLDTAGIRDTVDVIEKIGVQRAIDRALAADVRILLEIDDWILPDVLSDTIDFRYRAKADLSDGEGISGRTGVGIDRLLTDIEGVLSEKMSAVRSAVTDRQRGGIEAARVSLDAGVTVLSGTAELELAAEHIRHAQRSLDSVIGRVDVENLLGEIFSRFCIGK.

Positions 20, 77, and 117 each coordinate (6S)-5-formyl-5,6,7,8-tetrahydrofolate. The 138-residue stretch at 213 to 350 (GFEVAILGAP…LLTDIEGVLS (138 aa)) folds into the TrmE-type G domain. Asparagine 223 lines the K(+) pocket. GTP contacts are provided by residues 223–228 (NAGKST), 242–248 (SDVPGTT), and 267–270 (DTAG). Serine 227 contributes to the Mg(2+) binding site. Positions 242, 244, and 247 each coordinate K(+). Threonine 248 serves as a coordination point for Mg(2+). (6S)-5-formyl-5,6,7,8-tetrahydrofolate is bound at residue lysine 426.

It belongs to the TRAFAC class TrmE-Era-EngA-EngB-Septin-like GTPase superfamily. TrmE GTPase family. In terms of assembly, homodimer. Heterotetramer of two MnmE and two MnmG subunits. The cofactor is K(+).

Its subcellular location is the cytoplasm. In terms of biological role, exhibits a very high intrinsic GTPase hydrolysis rate. Involved in the addition of a carboxymethylaminomethyl (cmnm) group at the wobble position (U34) of certain tRNAs, forming tRNA-cmnm(5)s(2)U34. This chain is tRNA modification GTPase MnmE, found in Jannaschia sp. (strain CCS1).